A 184-amino-acid chain; its full sequence is Large ribosomal subunit protein uL5 (184 aa).

The protein belongs to the universal ribosomal protein uL5 family. In terms of assembly, part of the 50S ribosomal subunit; part of the 5S rRNA/L5/L18/L25 subcomplex. Contacts the 5S rRNA and the P site tRNA. Forms a bridge to the 30S subunit in the 70S ribosome.

Functionally, this is one of the proteins that bind and probably mediate the attachment of the 5S RNA into the large ribosomal subunit, where it forms part of the central protuberance. In the 70S ribosome it contacts protein S13 of the 30S subunit (bridge B1b), connecting the 2 subunits; this bridge is implicated in subunit movement. Contacts the P site tRNA; the 5S rRNA and some of its associated proteins might help stabilize positioning of ribosome-bound tRNAs. In Fervidobacterium nodosum (strain ATCC 35602 / DSM 5306 / Rt17-B1), this protein is Large ribosomal subunit protein uL5.